The primary structure comprises 477 residues: Leukotoxin export protein LtxD (477 aa).

A helical transmembrane segment spans residues 64 to 84; it reads IMLFLTLAIIVSIFSNVEIIA. A coiled-coil region spans residues 206 to 287; the sequence is LNLNKKEAEK…ENEVLLAKEE (82 aa).

Belongs to the membrane fusion protein (MFP) (TC 8.A.1) family. As to quaternary structure, probably part of a complex composed of LtxB, LtxD and TdeA, which forms a single transport channel across the two membranes.

The protein resides in the cell inner membrane. Its function is as follows. Involved in the export of the LtxA leukotoxin. The protein is Leukotoxin export protein LtxD of Aggregatibacter actinomycetemcomitans (Actinobacillus actinomycetemcomitans).